A 457-amino-acid chain; its full sequence is Phosphoglucosamine mutase (457 aa).

Serine 103 functions as the Phosphoserine intermediate in the catalytic mechanism. 4 residues coordinate Mg(2+): serine 103, aspartate 245, aspartate 247, and aspartate 249. The residue at position 103 (serine 103) is a Phosphoserine.

It belongs to the phosphohexose mutase family. The cofactor is Mg(2+). Post-translationally, activated by phosphorylation.

The enzyme catalyses alpha-D-glucosamine 1-phosphate = D-glucosamine 6-phosphate. Catalyzes the conversion of glucosamine-6-phosphate to glucosamine-1-phosphate. This Syntrophotalea carbinolica (strain DSM 2380 / NBRC 103641 / GraBd1) (Pelobacter carbinolicus) protein is Phosphoglucosamine mutase.